The following is an 877-amino-acid chain: Oligopeptide transporter 2 (877 aa).

Topologically, residues 1 to 167 (MSETVKDKVI…DPTIPVETFR (167 aa)) are cytoplasmic. The helical transmembrane segment at 168-188 (AYFLAIIWSVIGSGFNEFFSH) threads the bilayer. Arg-189 is a topological domain (extracellular). A helical transmembrane segment spans residues 190-210 (VVSISLNTPIIQMFLYICGKA). Topologically, residues 211-240 (WAKTIPCWTITIRGRKYGINIDKPWTQKEQ) are cytoplasmic. Residues 241–261 (MFSTLLYAICQGAFYTHYNIL) traverse the membrane as a helical segment. At 262–272 (TQKLFYHSAFS) the chain is on the extracellular side. Residues 273 to 293 (FGYQFLLSLSVQFIGFGFAGI) traverse the membrane as a helical segment. Residues 294–334 (LRKFVVYPARALWPTVMPTIAINKALLGKEKHESGMSRYKF) lie on the Cytoplasmic side of the membrane. The helical transmembrane segment at 335–355 (FFLTFFIMFIYNWFPTYIINI) threads the bilayer. The Extracellular segment spans residues 356-374 (LNTFNWMTWIKPSNINLAN). N-linked (GlcNAc...) asparagine glycosylation is present at Asn-374. The chain crosses the membrane as a helical span at residues 375-395 (ITGGVTGLGINPISSFDWNVI). The Cytoplasmic portion of the chain corresponds to 396–404 (SFNSPLVYP). The chain crosses the membrane as a helical span at residues 405–425 (FWSYLTQYLGCILAALIVIAV). At 426-480 (YYSNYMSCQYLPIFTNSLYTNTGHSFKVTEVLDSDNKLDVKKYQSYSPPYYSAGN) the chain is on the extracellular side. A helical transmembrane segment spans residues 481 to 501 (LVSYGAFICAYPLMITWSFIV). Topologically, residues 502-553 (HSKLLFNAFKDWALNLWAMRKLKSWVTMFKSDYRALDDYDDPHSNAMKNYKE) are cytoplasmic. A helical transmembrane segment spans residues 554 to 574 (VPDWWYFAILIGSLVVGIAVV). Over 575 to 582 (EHYPTNTP) the chain is Extracellular. A helical transmembrane segment spans residues 583 to 603 (VWGLFVCLGFNFVFLIPTTIL). The Cytoplasmic segment spans residues 604–614 (QATTGYSFGLN). A helical transmembrane segment spans residues 615-635 (LLIEMVMGYALPGNPIAIMIL). Over 636-671 (KAFGYNIDGQADNYVSNLKIAHYCKIPPMALFRGQC) the chain is Extracellular. The helical transmembrane segment at 672–692 (VIVFIQIFVNLGVLNWQISNI) threads the bilayer. Over 693 to 730 (KDFCTPHQNAKFTCPDAVTYYNASVVWGAIGPKRIFNY) the chain is Cytoplasmic. The helical transmembrane segment at 731–751 (IYPIFKWCWLIGACIGIFFGV) threads the bilayer. The Extracellular segment spans residues 752–766 (WKRWGKFYPRYFDPM). Residues 767–789 (LFVGGMLNMSPPYNLMYYTSGMI) traverse the membrane as a helical segment. At 790 to 811 (VSYISQYYMKRHHLNLWEKYNY) the chain is on the cytoplasmic side. Residues 812-832 (VLSAGFSTGLVLSAIIIFFAV) form a helical membrane-spanning segment. Over 833–877 (QYKDTAFNWWGNTVPYAGADGVGYPLKNITDTANGYFGYAPGHYP) the chain is Extracellular. N-linked (GlcNAc...) asparagine glycosylation is present at Asn-860.

It belongs to the oligopeptide OPT transporter family.

It is found in the membrane. In terms of biological role, transports tetra- and pentapeptides. Does not transport glutathione. This Saccharomyces cerevisiae (strain ATCC 204508 / S288c) (Baker's yeast) protein is Oligopeptide transporter 2 (OPT2).